Consider the following 479-residue polypeptide: 3-phytase B (479 aa).

Residues 1 to 19 (MPRTSLLTLACALATGASA) form the signal peptide. Intrachain disulfides connect C71–C387, C128–C472, C216–C441, C225–C298, and C413–C421. The Nucleophile role is filled by H82. Residue N191 is glycosylated (N-linked (GlcNAc...) asparagine). N-linked (GlcNAc...) asparagine glycosylation occurs at N315. Residue D338 is the Proton donor of the active site. An N-linked (GlcNAc...) asparagine glycan is attached at N458.

Belongs to the histidine acid phosphatase family. In terms of assembly, homodimer.

The catalysed reaction is 1D-myo-inositol hexakisphosphate + H2O = 1D-myo-inositol 1,2,4,5,6-pentakisphosphate + phosphate. Its function is as follows. Catalyzes the hydrolysis of inorganic orthophosphate from phytate. In Aspergillus awamori (Black koji mold), this protein is 3-phytase B (phyB).